The chain runs to 142 residues: Mitochondrial import receptor subunit TOM22 homolog (142 aa).

Low complexity predominate over residues 1-18; sequence MAAAVAAAGAGEPLSPEE. The tract at residues 1 to 41 is disordered; sequence MAAAVAAAGAGEPLSPEELLPKAEAEKAEEELEEDDDDELD. Ala-2 is subject to N-acetylalanine. Residues 2 to 83 are Cytoplasmic-facing; that stretch reads AAAVAAAGAG…AQKMYRFSRA (82 aa). Position 15 is a phosphoserine (Ser-15). Residues 27-41 are compositionally biased toward acidic residues; sequence KAEEELEEDDDDELD. The import sequence; necessary for mitochondrion outer membrane localization and integration in the TOM complex stretch occupies residues 41–50; that stretch reads DETLSERLWG. A Phosphothreonine modification is found at Thr-43. Ser-45 is subject to Phosphoserine. Residues 83-103 are TMD; necessary for mitochondrion outer membrane localization and integration in the TOM complex; the sequence is AALWIGTTSFMILVLPVVFET. Residues 84–103 traverse the membrane as a helical segment; the sequence is ALWIGTTSFMILVLPVVFET. At 104-142 the chain is on the mitochondrial intermembrane side; that stretch reads EKLQMEQQQQLQQRQILLGPNTGLSGGMPGALPPLPGKM. The interval 123 to 142 is C-tail signal; necessary for mitochondrion outer membrane localization and integration in the TOM complex; it reads PNTGLSGGMPGALPPLPGKM.

This sequence belongs to the Tom22 family. As to quaternary structure, forms part of the preprotein translocase complex of the outer mitochondrial membrane (TOM complex) which consists of at least 7 different proteins (TOMM5, TOMM6, TOMM7, TOMM20, TOMM22, TOMM40 and TOMM70). Interacts with PPP2R2B and TOMM40.

Its subcellular location is the mitochondrion outer membrane. Functionally, central receptor component of the translocase of the outer membrane of mitochondria (TOM complex) responsible for the recognition and translocation of cytosolically synthesized mitochondrial preproteins. Together with the peripheral receptor TOM20 functions as the transit peptide receptor and facilitates the movement of preproteins into the translocation pore. Required for the translocation across the mitochondrial outer membrane of cytochrome P450 monooxygenases. This Mus musculus (Mouse) protein is Mitochondrial import receptor subunit TOM22 homolog (Tomm22).